The primary structure comprises 135 residues: MATFHFDLVSPEKIAFSGEVDQVDVPGQEGDFGVLAGHAPFVATLRPGILTVTTGGTQQKIIVLGGLAEISEKGLTILADVATSLKELDQTAFATEISGMEAKLNEKQGDELDRAIERLDHFKTIQQQLNTTALH.

It belongs to the ATPase epsilon chain family. As to quaternary structure, F-type ATPases have 2 components, CF(1) - the catalytic core - and CF(0) - the membrane proton channel. CF(1) has five subunits: alpha(3), beta(3), gamma(1), delta(1), epsilon(1). CF(0) has three main subunits: a, b and c.

Its subcellular location is the cell inner membrane. In terms of biological role, produces ATP from ADP in the presence of a proton gradient across the membrane. This is ATP synthase epsilon chain from Bradyrhizobium sp. (strain ORS 278).